A 338-amino-acid polypeptide reads, in one-letter code: Glycerol-3-phosphate dehydrogenase [NAD(P)+] (338 aa).

NADPH is bound by residues Ser-12, Trp-13, Lys-34, and Lys-110. The sn-glycerol 3-phosphate site is built by Lys-110, Gly-141, and Ser-143. NADPH is bound at residue Ala-145. Positions 196, 249, 259, 260, and 261 each coordinate sn-glycerol 3-phosphate. Lys-196 (proton acceptor) is an active-site residue. NADPH is bound at residue Arg-260. 2 residues coordinate NADPH: Val-284 and Glu-286.

The protein belongs to the NAD-dependent glycerol-3-phosphate dehydrogenase family.

Its subcellular location is the cytoplasm. The enzyme catalyses sn-glycerol 3-phosphate + NAD(+) = dihydroxyacetone phosphate + NADH + H(+). It catalyses the reaction sn-glycerol 3-phosphate + NADP(+) = dihydroxyacetone phosphate + NADPH + H(+). Its pathway is membrane lipid metabolism; glycerophospholipid metabolism. Catalyzes the reduction of the glycolytic intermediate dihydroxyacetone phosphate (DHAP) to sn-glycerol 3-phosphate (G3P), the key precursor for phospholipid synthesis. In Ligilactobacillus salivarius (strain UCC118) (Lactobacillus salivarius), this protein is Glycerol-3-phosphate dehydrogenase [NAD(P)+].